The primary structure comprises 320 residues: Methionyl-tRNA formyltransferase (320 aa).

Position 114–117 (114–117 (SLLP)) interacts with (6S)-5,6,7,8-tetrahydrofolate.

This sequence belongs to the Fmt family.

It catalyses the reaction L-methionyl-tRNA(fMet) + (6R)-10-formyltetrahydrofolate = N-formyl-L-methionyl-tRNA(fMet) + (6S)-5,6,7,8-tetrahydrofolate + H(+). Attaches a formyl group to the free amino group of methionyl-tRNA(fMet). The formyl group appears to play a dual role in the initiator identity of N-formylmethionyl-tRNA by promoting its recognition by IF2 and preventing the misappropriation of this tRNA by the elongation apparatus. In Acinetobacter baumannii (strain ACICU), this protein is Methionyl-tRNA formyltransferase.